A 383-amino-acid polypeptide reads, in one-letter code: Podocin (383 aa).

Basic and acidic residues predominate over residues 1 to 41 (MERRARSSSRESRGRGGRTPHKENKRAKAERSGGGRGRQEA). A disordered region spans residues 1 to 76 (MERRARSSSR…VDEVRGSGEE (76 aa)). The Cytoplasmic portion of the chain corresponds to 1–102 (MERRARSSSR…TKSSGLGACE (102 aa)). Residue Cys101 is the site of S-palmitoyl cysteine attachment. An intramembrane segment occupies 103-123 (WLLVLISLLFIIMTFPFSIWF). Topologically, residues 124–383 (CVKVVQEYER…NPKKKDSPML (260 aa)) are cytoplasmic. The N-linked (GlcNAc...) asparagine glycan is linked to Gln287. A disordered region spans residues 355-383 (NRTQGSLPFPSPSKPVEPLNPKKKDSPML). Basic and acidic residues predominate over residues 374-383 (NPKKKDSPML).

The protein belongs to the band 7/mec-2 family. Interacts with nephrin/NPHS1 and KIRREL1. Interacts directly with CD2AP. Interacts with DDN. Post-translationally, glycosylated. In terms of tissue distribution, almost exclusively expressed in the podocytes of fetal and mature kidney glomeruli.

It localises to the cell membrane. Its subcellular location is the endoplasmic reticulum. Functionally, plays a role in the regulation of glomerular permeability, acting probably as a linker between the plasma membrane and the cytoskeleton. This is Podocin (NPHS2) from Homo sapiens (Human).